Consider the following 866-residue polypeptide: Phospholipase D gamma 3 (866 aa).

Positions 31–170 constitute a C2 domain; sequence PFDTSSGSLR…CSGNRIEGLF (140 aa). Position 232 (Asp-232) interacts with Ca(2+). The region spanning 371–406 is the PLD phosphodiesterase 1 domain; that stretch reads TIYTHHQKTMIVDAEAAQNRRKIVAFVGGLDLCNGR. Catalysis depends on residues His-376, Lys-378, and Asp-383. His-376 provides a ligand contact to a 1,2-diacyl-sn-glycero-3-phosphate. Ca(2+)-binding residues include His-412 and His-444. Gln-572 is an a 1,2-diacyl-sn-glycero-3-phosphate binding site. Ser-692 is modified (phosphoserine). The PLD phosphodiesterase 2 domain maps to 712–739; that stretch reads FMIYVHSKGMVVDDEFVLIGSANINQRS. Catalysis depends on residues His-717, Lys-719, and Asp-724. His-717 serves as a coordination point for a 1,2-diacyl-sn-glycero-3-phosphate. Glu-780 serves as a coordination point for Ca(2+).

It belongs to the phospholipase D family. C2-PLD subfamily. It depends on Ca(2+) as a cofactor. In terms of tissue distribution, highly expressed in inflorescences and old leaves, moderately in stems, roots, siliques and young leaves and low in flowers.

Its subcellular location is the cytoplasm. The protein resides in the membrane. It carries out the reaction a 1,2-diacyl-sn-glycero-3-phosphocholine + H2O = a 1,2-diacyl-sn-glycero-3-phosphate + choline + H(+). With respect to regulation, inhibited by neomycin. Functionally, hydrolyzes glycerol-phospholipids at the terminal phosphodiesteric bond to generate phosphatidic acids (PA). Plays an important role in various cellular processes, including phytohormone action, vesicular trafficking, secretion, cytoskeletal arrangement, meiosis, tumor promotion, pathogenesis, membrane deterioration and senescence. Can use phosphatidylserine but prefers ethanolamine-containing lipids as substrates. The protein is Phospholipase D gamma 3 of Arabidopsis thaliana (Mouse-ear cress).